We begin with the raw amino-acid sequence, 313 residues long: Methionyl-tRNA formyltransferase (313 aa).

Residues 32-51 (QPDRRKGRGKELQPPPAKRK) form a disordered region. Residue 109 to 112 (SLLP) coordinates (6S)-5,6,7,8-tetrahydrofolate.

Belongs to the Fmt family.

The catalysed reaction is L-methionyl-tRNA(fMet) + (6R)-10-formyltetrahydrofolate = N-formyl-L-methionyl-tRNA(fMet) + (6S)-5,6,7,8-tetrahydrofolate + H(+). Attaches a formyl group to the free amino group of methionyl-tRNA(fMet). The formyl group appears to play a dual role in the initiator identity of N-formylmethionyl-tRNA by promoting its recognition by IF2 and preventing the misappropriation of this tRNA by the elongation apparatus. This chain is Methionyl-tRNA formyltransferase, found in Natranaerobius thermophilus (strain ATCC BAA-1301 / DSM 18059 / JW/NM-WN-LF).